The chain runs to 277 residues: Transcription antiterminator LicT (277 aa).

PRD domains follow at residues 65 to 170 and 171 to 277; these read DIPI…EEMP and NIIN…VKQA.

The protein belongs to the transcriptional antiterminator BglG family. Post-translationally, phosphorylated.

Functionally, mediates positive regulation of the glucanase operon (licST) by functioning as an antiterminator factor of transcription. Prevents termination at terminator lic-t. This chain is Transcription antiterminator LicT (licT), found in Bacillus subtilis (strain 168).